The primary structure comprises 69 residues: NAD(P)H-quinone oxidoreductase subunit L (69 aa).

2 consecutive transmembrane segments (helical) span residues 5 to 25 (LILL…ITYF) and 40 to 60 (GFMY…SPFL).

This sequence belongs to the complex I NdhL subunit family. NDH-1 can be composed of about 15 different subunits; different subcomplexes with different compositions have been identified which probably have different functions.

It is found in the cellular thylakoid membrane. It carries out the reaction a plastoquinone + NADH + (n+1) H(+)(in) = a plastoquinol + NAD(+) + n H(+)(out). The enzyme catalyses a plastoquinone + NADPH + (n+1) H(+)(in) = a plastoquinol + NADP(+) + n H(+)(out). In terms of biological role, NDH-1 shuttles electrons from an unknown electron donor, via FMN and iron-sulfur (Fe-S) centers, to quinones in the respiratory and/or the photosynthetic chain. The immediate electron acceptor for the enzyme in this species is believed to be plastoquinone. Couples the redox reaction to proton translocation, and thus conserves the redox energy in a proton gradient. Cyanobacterial NDH-1 also plays a role in inorganic carbon-concentration. In Acaryochloris marina (strain MBIC 11017), this protein is NAD(P)H-quinone oxidoreductase subunit L.